The chain runs to 454 residues: GTPase Der (454 aa).

EngA-type G domains are found at residues 4 to 167 (AIVA…SEDK) and 188 to 363 (LELA…ASWQ). GTP-binding positions include 10-17 (GKPNVGKS), 56-60 (DTPGL), 121-124 (NKTE), 194-201 (GRPNCGKS), 241-245 (DTAGV), and 306-309 (NKWD). The region spanning 364 to 450 (KRVTTGTLNQ…PVRLSFVKGK (87 aa)) is the KH-like domain.

This sequence belongs to the TRAFAC class TrmE-Era-EngA-EngB-Septin-like GTPase superfamily. EngA (Der) GTPase family. Associates with the 50S ribosomal subunit.

In terms of biological role, GTPase that plays an essential role in the late steps of ribosome biogenesis. The protein is GTPase Der of Orientia tsutsugamushi (strain Ikeda) (Rickettsia tsutsugamushi).